We begin with the raw amino-acid sequence, 184 residues long: MDLKEISKQTEEVIEELLDIANLKPGSLFVLGGSTSEILGKKVGTAGSLDVAKAVVDPILEAIHKRGLYLAVQGCEHINRALLVEEEAKDKYGLEEVNVIPHEHAGGSIQTYAYQQFKNPVMVENLKGLGHAGLDIGLVLIGMHLRPVVVPVRLSRNKIGEATIVAARTRPKMVGGERARYKKL.

This sequence belongs to the UPF0340 family.

The polypeptide is UPF0340 protein TTE0860 (Caldanaerobacter subterraneus subsp. tengcongensis (strain DSM 15242 / JCM 11007 / NBRC 100824 / MB4) (Thermoanaerobacter tengcongensis)).